Reading from the N-terminus, the 62-residue chain is Photosystem II reaction center protein Z (62 aa).

A run of 2 helical transmembrane segments spans residues 8 to 28 (AVFA…VVFA) and 41 to 61 (FSGT…NSLI).

Belongs to the PsbZ family. PSII is composed of 1 copy each of membrane proteins PsbA, PsbB, PsbC, PsbD, PsbE, PsbF, PsbH, PsbI, PsbJ, PsbK, PsbL, PsbM, PsbT, PsbY, PsbZ, Psb30/Ycf12, at least 3 peripheral proteins of the oxygen-evolving complex and a large number of cofactors. It forms dimeric complexes.

It is found in the plastid. Its subcellular location is the chloroplast thylakoid membrane. Its function is as follows. May control the interaction of photosystem II (PSII) cores with the light-harvesting antenna, regulates electron flow through the 2 photosystem reaction centers. PSII is a light-driven water plastoquinone oxidoreductase, using light energy to abstract electrons from H(2)O, generating a proton gradient subsequently used for ATP formation. The chain is Photosystem II reaction center protein Z from Lotus japonicus (Lotus corniculatus var. japonicus).